A 256-amino-acid chain; its full sequence is Omega-amidase YafV (256 aa).

The CN hydrolase domain occupies 4–234 (LKLTLLQQPL…AAQLDAELSL (231 aa)). Residue Glu42 is the Proton acceptor of the active site. Lys107 is a catalytic residue. Residue Cys141 is the Nucleophile of the active site.

The protein belongs to the carbon-nitrogen hydrolase superfamily. NIT1/NIT2 family.

The enzyme catalyses a monoamide of a dicarboxylate + H2O = a dicarboxylate + NH4(+). Functionally, hydrolyzes alpha-ketoglutaramate (a-KGM) to alpha-ketoglutarate (alpha-KG) and ammonia (specific activity 21 umol/min/mg), has very weak activity on L-glutamine, and no activity on deaminated glutathione (dGSH) or glutathione. May function as a metabolite repair enzyme. The sequence is that of Omega-amidase YafV from Yersinia enterocolitica.